Here is a 186-residue protein sequence, read N- to C-terminus: Large ribosomal subunit protein bL12c (186 aa).

The span at 1 to 11 shows a compositional bias: polar residues; it reads MASTLSTITLR. The segment at 1 to 24 is disordered; that stretch reads MASTLSTITLRSPSPSTATSTHAS. A chloroplast-targeting transit peptide spans 1–53; sequence MASTLSTITLRSPSPSTATSTHASIPFPKKTLEFPIRTPKLQNRRATFLRPLA. Residues 12-24 show a composition bias toward low complexity; it reads SPSPSTATSTHAS.

This sequence belongs to the bacterial ribosomal protein bL12 family.

The protein localises to the plastid. The protein resides in the chloroplast. The polypeptide is Large ribosomal subunit protein bL12c (Nicotiana sylvestris (Wood tobacco)).